The following is a 119-amino-acid chain: Large ribosomal subunit protein bL20 (119 aa).

This sequence belongs to the bacterial ribosomal protein bL20 family.

Functionally, binds directly to 23S ribosomal RNA and is necessary for the in vitro assembly process of the 50S ribosomal subunit. It is not involved in the protein synthesizing functions of that subunit. The protein is Large ribosomal subunit protein bL20 of Streptococcus gordonii (strain Challis / ATCC 35105 / BCRC 15272 / CH1 / DL1 / V288).